The chain runs to 341 residues: Chitin synthase 3 complex protein CSI2 (341 aa).

Over residues Ser35–Ser70 the composition is skewed to low complexity. Disordered regions lie at residues Ser35–Lys78, Asp272–Thr291, and Asn298–Glu341.

Its function is as follows. Appears to be a structural component of the chitin synthase 3 complex. The sequence is that of Chitin synthase 3 complex protein CSI2 (CSI2) from Saccharomyces cerevisiae (strain ATCC 204508 / S288c) (Baker's yeast).